A 451-amino-acid polypeptide reads, in one-letter code: Chromosomal replication initiator protein DnaA (451 aa).

Residues 1 to 71 (MSEKEIWDKV…QAIIYDVIGY (71 aa)) form a domain I, interacts with DnaA modulators region. The tract at residues 71–112 (YEVKPHFISEDELASYNNVNTQEVQEPQVQHSSIDDKTWGKE) is domain II. The segment at 113–329 (QFNMHNTFDT…GALTRLLAYS (217 aa)) is domain III, AAA+ region. Residues Gly-157, Gly-159, Lys-160, and Thr-161 each contribute to the ATP site. Residues 330–451 (KLQGKPITTE…ENLEKEIRNQ (122 aa)) form a domain IV, binds dsDNA region.

Belongs to the DnaA family. In terms of assembly, oligomerizes as a right-handed, spiral filament on DNA at oriC.

It localises to the cytoplasm. Functionally, plays an essential role in the initiation and regulation of chromosomal replication. ATP-DnaA binds to the origin of replication (oriC) to initiate formation of the DNA replication initiation complex once per cell cycle. Binds the DnaA box (a 9 base pair repeat at the origin) and separates the double-stranded (ds)DNA. Forms a right-handed helical filament on oriC DNA; dsDNA binds to the exterior of the filament while single-stranded (ss)DNA is stabiized in the filament's interior. The ATP-DnaA-oriC complex binds and stabilizes one strand of the AT-rich DNA unwinding element (DUE), permitting loading of DNA polymerase. After initiation quickly degrades to an ADP-DnaA complex that is not apt for DNA replication. Binds acidic phospholipids. This is Chromosomal replication initiator protein DnaA from Staphylococcus epidermidis (strain ATCC 35984 / DSM 28319 / BCRC 17069 / CCUG 31568 / BM 3577 / RP62A).